A 581-amino-acid chain; its full sequence is Phosphoinositide phospholipase C 2 (581 aa).

The EF-hand-like domain occupies 26–102 (EIKTIFEKYS…NPPLALHKVH (77 aa)). The PI-PLC X-box domain maps to 103–248 (HDMDAPISHY…LKRRIIISTK (146 aa)). Residues His118 and His164 contribute to the active site. The tract at residues 279–314 (PSFIQRNKSEAKDDLDGNDDDDDDDDEDKSKINAPP) is disordered. The segment covering 294 to 305 (DGNDDDDDDDDE) has biased composition (acidic residues). A PI-PLC Y-box domain is found at 317–433 (KHLIAIHAGK…GYIKKPDLLL (117 aa)). Positions 434–563 (KSGSDSDIFD…EGIRAFPLHS (130 aa)) constitute a C2 domain.

Ca(2+) serves as cofactor. In terms of processing, phosphorylation level varies significantly during early response to bacterial elicitor. Expressed in roots, shoots, leaves and flowers.

It localises to the cell membrane. It carries out the reaction a 1,2-diacyl-sn-glycero-3-phospho-(1D-myo-inositol-4,5-bisphosphate) + H2O = 1D-myo-inositol 1,4,5-trisphosphate + a 1,2-diacyl-sn-glycerol + H(+). The production of the second messenger molecules diacylglycerol (DAG) and inositol 1,4,5-trisphosphate (IP3) is mediated by activated phosphatidylinositol-specific phospholipase C enzymes. At physiological calcium concentration, the preferred substrate is phosphatidylinositol 4,5-bisphosphate versus phosphatidylinositol. The protein is Phosphoinositide phospholipase C 2 (PLC2) of Arabidopsis thaliana (Mouse-ear cress).